Reading from the N-terminus, the 368-residue chain is Phosphate acyltransferase (368 aa).

The segment at 337–368 (LEQAARDASGAGQASPIAGQPAEPYAAQSSKA) is disordered.

It belongs to the PlsX family. As to quaternary structure, homodimer. Probably interacts with PlsY.

It is found in the cytoplasm. It carries out the reaction a fatty acyl-[ACP] + phosphate = an acyl phosphate + holo-[ACP]. It functions in the pathway lipid metabolism; phospholipid metabolism. Catalyzes the reversible formation of acyl-phosphate (acyl-PO(4)) from acyl-[acyl-carrier-protein] (acyl-ACP). This enzyme utilizes acyl-ACP as fatty acyl donor, but not acyl-CoA. This chain is Phosphate acyltransferase, found in Paraburkholderia phytofirmans (strain DSM 17436 / LMG 22146 / PsJN) (Burkholderia phytofirmans).